The following is a 224-amino-acid chain: Glutathione S-transferase U8 (224 aa).

Residues Glu5–His85 form the GST N-terminal domain. Glutathione-binding positions include Ser15 to Pro16, Asn42 to Arg43, Lys56 to Val57, and Glu69 to Ser70. A GST C-terminal domain is found at Asp91–Val213. Thr152 carries the post-translational modification Phosphothreonine.

Belongs to the GST superfamily. Tau family.

It is found in the cytoplasm. The protein resides in the cytosol. The enzyme catalyses RX + glutathione = an S-substituted glutathione + a halide anion + H(+). In terms of biological role, may be involved in the conjugation of reduced glutathione to a wide number of exogenous and endogenous hydrophobic electrophiles and have a detoxification role against certain herbicides. This Arabidopsis thaliana (Mouse-ear cress) protein is Glutathione S-transferase U8 (GSTU8).